Reading from the N-terminus, the 182-residue chain is NADH-quinone oxidoreductase subunit B (182 aa).

C46, C47, C112, and C141 together coordinate [4Fe-4S] cluster.

Belongs to the complex I 20 kDa subunit family. As to quaternary structure, NDH-1 is composed of 14 different subunits. Subunits NuoB, C, D, E, F, and G constitute the peripheral sector of the complex. Requires [4Fe-4S] cluster as cofactor.

The protein localises to the cell inner membrane. It carries out the reaction a quinone + NADH + 5 H(+)(in) = a quinol + NAD(+) + 4 H(+)(out). NDH-1 shuttles electrons from NADH, via FMN and iron-sulfur (Fe-S) centers, to quinones in the respiratory chain. The immediate electron acceptor for the enzyme in this species is believed to be a menaquinone. Couples the redox reaction to proton translocation (for every two electrons transferred, four hydrogen ions are translocated across the cytoplasmic membrane), and thus conserves the redox energy in a proton gradient. The protein is NADH-quinone oxidoreductase subunit B of Flavobacterium johnsoniae (strain ATCC 17061 / DSM 2064 / JCM 8514 / BCRC 14874 / CCUG 350202 / NBRC 14942 / NCIMB 11054 / UW101) (Cytophaga johnsonae).